The sequence spans 556 residues: MKTDIEIAQSIELKPIVDVVEKLGISYDDLELYGKYKAKLSFDKIRAVESNPVGKLILVTAINPTPAGEGKSTLTIGLADALNKIGKKTMIAIREPSLGPVMGIKGGAAGGGYAQVLPMEDINLHFTGDMHAITTANNALSALIDNHLHQGNELEIDQRRILWKRVVDLNDRALRHVTVGLGGPLNGIPREDGFDITVASEIMAILCLATDIEDLKRRLANIVIGYRYDRTPVSVGDLQVEGALALILKDAIKPNLVQTIYGTPAFVHGGPFANIAHGCNSVLATTTALHLADYTVTEAGFGADLGAEKFLDIKTPNLPTSPDAVVIVATLRALKMNGGVAKDALTEENVEAVRAGFANLKRHVENIRKFGIPAVVAINEFVSDTEAEIAVLKELCASIDVPVELASVWADGAEGGVALAETVVKTIAENPANYKRLYDNALSVQEKIEKIVTEIYRGSKVNFEKKAQTQIAQIVQNGWDKLPICMAKTQYSFSDNPNALGAPENFEITIRELVPKLGAGFIVALTGDVMTMPGLPKRPAALNMDVESDGTVLGLF.

65–72 contributes to the ATP binding site; sequence TPAGEGKS.

This sequence belongs to the formate--tetrahydrofolate ligase family.

The enzyme catalyses (6S)-5,6,7,8-tetrahydrofolate + formate + ATP = (6R)-10-formyltetrahydrofolate + ADP + phosphate. The protein operates within one-carbon metabolism; tetrahydrofolate interconversion. The sequence is that of Formate--tetrahydrofolate ligase from Streptococcus pneumoniae (strain JJA).